Here is a 188-residue protein sequence, read N- to C-terminus: dCTP deaminase (188 aa).

DCTP contacts are provided by residues 111–116, 135–137, Gln156, Tyr170, and Gln180; these read KSTYAR and TLE. Residue Glu137 is the Proton donor/acceptor of the active site.

The protein belongs to the dCTP deaminase family. In terms of assembly, homotrimer.

The enzyme catalyses dCTP + H2O + H(+) = dUTP + NH4(+). The protein operates within pyrimidine metabolism; dUMP biosynthesis; dUMP from dCTP (dUTP route): step 1/2. In terms of biological role, catalyzes the deamination of dCTP to dUTP. The polypeptide is dCTP deaminase (Paracidovorax citrulli (strain AAC00-1) (Acidovorax citrulli)).